The sequence spans 833 residues: Leucine--tRNA ligase (833 aa).

Residues 41–52 (PYPSGAGLHVGH) carry the 'HIGH' region motif. The 'KMSKS' region motif lies at 610–614 (KMSKS). Residue Lys-613 participates in ATP binding.

The protein belongs to the class-I aminoacyl-tRNA synthetase family.

Its subcellular location is the cytoplasm. The catalysed reaction is tRNA(Leu) + L-leucine + ATP = L-leucyl-tRNA(Leu) + AMP + diphosphate. The sequence is that of Leucine--tRNA ligase from Streptococcus pneumoniae (strain ATCC 700669 / Spain 23F-1).